The chain runs to 1383 residues: Negative regulator of sporulation MDS3 (1383 aa).

Kelch repeat units follow at residues 124–179 (CLYL…SPRF), 199–246 (GLFI…KDKE), and 356–402 (QNVV…WGGF). Positions 450-460 (GRSNNRTSSFV) are enriched in polar residues. 7 disordered regions span residues 450 to 506 (GRSN…VLDA), 625 to 644 (NQRLRSKSSNSESSSSDIPK), 653 to 825 (LLSS…DLFS), 858 to 884 (LDSFSSGKSSMAKVSSVPGENPDSDES), 1063 to 1114 (NNSR…VDKE), 1251 to 1289 (QLKESQLQSKSSPIIPTVSTVTPSPLPSISGVPSPRLPQ), and 1321 to 1369 (SMTD…KSSS). Positions 631–644 (KSSNSESSSSDIPK) are enriched in low complexity. A compositionally biased stretch (basic and acidic residues) spans 693–707 (VNREEGSDCSKDRKT). 3 stretches are compositionally biased toward low complexity: residues 726 to 758 (NSTSSFQSNSSSLLTSHLQDIPPQLPLPDEQIP), 803 to 815 (ESPFSSPRPSMSG), and 858 to 874 (LDSFSSGKSSMAKVSSV). Residues 1084 to 1094 (EGEKQEEIVSK) show a composition bias toward basic and acidic residues. The segment covering 1251–1280 (QLKESQLQSKSSPIIPTVSTVTPSPLPSIS) has biased composition (low complexity). Polar residues predominate over residues 1341 to 1352 (LQQTMLSRTPTN).

As to quaternary structure, interacts with SIT4.

The protein resides in the cytoplasm. Its function is as follows. Negatively regulates early sporulation-specific genes. TOR signaling pathway component that contributes to morphogenesis as a regulator of this key morphogenetic pathway. Required for growth and hyphal formation at pH 9, for full virulence in a mouse model of systemic infection and for biofilm formation. Involved in chlamydospore formation, distinctive morphological feature of the fungal pathogen C.albicans that can be induced to form in oxygen-limited environments and has been reported in clinical specimens. The chain is Negative regulator of sporulation MDS3 (MDS3) from Candida albicans (strain SC5314 / ATCC MYA-2876) (Yeast).